Here is a 306-residue protein sequence, read N- to C-terminus: Ribonucleoside-diphosphate reductase small subunit (306 aa).

Fe cation-binding residues include aspartate 66, glutamate 96, and histidine 99. Residue tyrosine 103 is part of the active site. A helical transmembrane segment spans residues 153 to 173 (ILMILIEGIFFVSSFAAIAYL). Residues glutamate 159, glutamate 193, and histidine 196 each contribute to the Fe cation site.

The protein belongs to the ribonucleoside diphosphate reductase small chain family. In terms of assembly, heterotetramer composed of a homodimer of the large subunit (R1) and a homodimer of the small subunit (R2). Larger multisubunit protein complex are also active, composed of (R1)n(R2)n. The cofactor is Fe cation.

The protein localises to the host membrane. It catalyses the reaction a 2'-deoxyribonucleoside 5'-diphosphate + [thioredoxin]-disulfide + H2O = a ribonucleoside 5'-diphosphate + [thioredoxin]-dithiol. Functionally, ribonucleoside-diphosphate reductase holoenzyme provides the precursors necessary for viral DNA synthesis. Allows virus growth in non-dividing cells, as well as reactivation from latency in infected hosts. Catalyzes the biosynthesis of deoxyribonucleotides from the corresponding ribonucleotides. In Varicella-zoster virus (strain Dumas) (HHV-3), this protein is Ribonucleoside-diphosphate reductase small subunit.